Here is a 330-residue protein sequence, read N- to C-terminus: Virulence plasmid integrase pGP8-D (330 aa).

One can recognise a Core-binding (CB) domain in the interval F39–N124. One can recognise a Tyr recombinase domain in the interval V152–M327. Residues R189, K214, H279, R282, and H305 contribute to the active site. Y314 acts as the O-(3'-phospho-DNA)-tyrosine intermediate in catalysis.

This sequence belongs to the 'phage' integrase family.

This chain is Virulence plasmid integrase pGP8-D, found in Chlamydia trachomatis serovar L2 (strain ATCC VR-902B / DSM 19102 / 434/Bu).